A 559-amino-acid polypeptide reads, in one-letter code: 3-aminoavenalumate diazotase (559 aa).

Position 181 (serine 181) interacts with Mg(2+). 3 residues coordinate ATP: alanine 227, glycine 332, and serine 336. Residue glutamate 337 coordinates Mg(2+). Residues aspartate 416 and arginine 437 each coordinate ATP.

Belongs to the ATP-dependent AMP-binding enzyme family. Requires Mg(2+) as cofactor.

It carries out the reaction 3-aminoavenalumate + nitrite + ATP = 3-diazoavenalumate + AMP + diphosphate + H2O. It catalyses the reaction (E)-3-aminocoumarate + nitrite + ATP + H(+) = (E)-3-diazocoumarate + AMP + diphosphate + H2O. The enzyme catalyses 3-amino-4-hydroxybenzoate + nitrite + ATP + H(+) = 3-diazo-4-hydroxybenzoate + AMP + diphosphate + H2O. Its function is as follows. Ligase involved in the biosynthesis of avenalumic acid (AVA). Catalyzes the diazotization of 3-aminoavenalumic acid (3-AAA) to 3-diazoavenalumic acid (3-DAA). It can also act on 3-aminocoumaric acid (3-ACA) and 3-amino-4-hydroxybenzoic acid (3,4-AHBA) with lower activity. The chain is 3-aminoavenalumate diazotase from Streptomyces sp.